Here is a 416-residue protein sequence, read N- to C-terminus: MAAASTNRLRLLYTSTRASLPQSTPSILTTRTYATTDSSTSATSTPKPRRRTAFTDKLNAGPSFGDFVSGNNDNAPLIDPSEAYALETALVGPAGRKKQMTRLPPWLKTPIPDSKNYQRLKKDLRGLNLHTVCEEARCPNISDCWGGGDKAAATATIMLMGDTCTRGCSFCSVKTSRRPAALDPHEPENTAEAISRWGLGYVVLTSVDRDDLADGGARHFAETVRKIKSKAPSTLVECLTGDYRGDLDMVALVANSGLDVYAHNIETVEALTPRVRDRRATFKQSIAVLEAAKKANPEVITKSSLMLGLGETEEQLEHALAQLRAVDVDVVTFGQYMRPTKRHMAVHEYVHPRWFEHWQRRAEELGFLYCASGPLVRSSYKAGEAFIENVLKKRRAGVSDAVAEKKVAAAVDEAAR.

Residues 1-33 constitute a mitochondrion transit peptide; sequence MAAASTNRLRLLYTSTRASLPQSTPSILTTRTY. Residues 20–52 are disordered; sequence LPQSTPSILTTRTYATTDSSTSATSTPKPRRRT. The span at 29–46 shows a compositional bias: low complexity; that stretch reads TTRTYATTDSSTSATSTP. Positions 133, 138, 144, 164, 168, 171, and 379 each coordinate [4Fe-4S] cluster. The 222-residue stretch at 147-368 folds into the Radical SAM core domain; that stretch reads GGDKAAATAT…QRRAEELGFL (222 aa).

It belongs to the radical SAM superfamily. Lipoyl synthase family. It depends on [4Fe-4S] cluster as a cofactor.

The protein resides in the mitochondrion. It catalyses the reaction [[Fe-S] cluster scaffold protein carrying a second [4Fe-4S](2+) cluster] + N(6)-octanoyl-L-lysyl-[protein] + 2 oxidized [2Fe-2S]-[ferredoxin] + 2 S-adenosyl-L-methionine + 4 H(+) = [[Fe-S] cluster scaffold protein] + N(6)-[(R)-dihydrolipoyl]-L-lysyl-[protein] + 4 Fe(3+) + 2 hydrogen sulfide + 2 5'-deoxyadenosine + 2 L-methionine + 2 reduced [2Fe-2S]-[ferredoxin]. It functions in the pathway protein modification; protein lipoylation via endogenous pathway; protein N(6)-(lipoyl)lysine from octanoyl-[acyl-carrier-protein]: step 2/2. Its function is as follows. Catalyzes the radical-mediated insertion of two sulfur atoms into the C-6 and C-8 positions of the octanoyl moiety bound to the lipoyl domains of lipoate-dependent enzymes, thereby converting the octanoylated domains into lipoylated derivatives. The protein is Lipoyl synthase, mitochondrial of Aspergillus niger (strain ATCC MYA-4892 / CBS 513.88 / FGSC A1513).